The sequence spans 325 residues: CRISPR-associated endonuclease Cas1 2 (325 aa).

Positions 145, 212, and 225 each coordinate Mn(2+). The disordered stretch occupies residues 283–325; sequence EEEDPVEEDPTRPGGLWDLEGEVEGGVAYGGDDPGEGAEEPEG. Positions 315–325 are enriched in acidic residues; that stretch reads DPGEGAEEPEG.

This sequence belongs to the CRISPR-associated endonuclease Cas1 family. As to quaternary structure, homodimer, forms a heterotetramer with a Cas2 homodimer. Mg(2+) is required as a cofactor. Mn(2+) serves as cofactor.

Functionally, CRISPR (clustered regularly interspaced short palindromic repeat), is an adaptive immune system that provides protection against mobile genetic elements (viruses, transposable elements and conjugative plasmids). CRISPR clusters contain spacers, sequences complementary to antecedent mobile elements, and target invading nucleic acids. CRISPR clusters are transcribed and processed into CRISPR RNA (crRNA). Acts as a dsDNA endonuclease. Involved in the integration of spacer DNA into the CRISPR cassette. In Thermus thermophilus (strain ATCC 27634 / DSM 579 / HB8), this protein is CRISPR-associated endonuclease Cas1 2.